Here is a 198-residue protein sequence, read N- to C-terminus: Autophagy-related protein 16 (198 aa).

The stretch at 24–177 (ELVQTCSQMA…NKELVDRWMK (154 aa)) forms a coiled coil.

Belongs to the ATG16 family. Homodimer. Part of the ATG5-ATG12/ATG16 complex. Several units of each may be present in this complex. Interacts directly with ATG12.

The protein localises to the preautophagosomal structure membrane. Functionally, stabilizes the ATG5-ATG12 conjugate. The ATG5-ATG12/ATG16 complex is required for efficient promotion of ATG8-conjugation to phosphatidylethanolamine and ATG8 localization to the pre-autophagosomal structure (PAS). Also recruits ATG3 to the PAS. Involved in endoplasmic reticulum-specific autophagic process and is essential for the survival of cells subjected to severe ER stress. Autophagy is required for proper vegetative growth, asexual/sexual reproduction, and full virulence. Autophagy is particularly involved in the biosynthesis of deoxynivalenol (DON), an important virulence determinant. This is Autophagy-related protein 16 from Gibberella zeae (strain ATCC MYA-4620 / CBS 123657 / FGSC 9075 / NRRL 31084 / PH-1) (Wheat head blight fungus).